The primary structure comprises 426 residues: Glutamate-1-semialdehyde 2,1-aminomutase (426 aa).

K265 bears the N6-(pyridoxal phosphate)lysine mark.

Belongs to the class-III pyridoxal-phosphate-dependent aminotransferase family. HemL subfamily. As to quaternary structure, homodimer. Pyridoxal 5'-phosphate serves as cofactor.

It localises to the cytoplasm. It carries out the reaction (S)-4-amino-5-oxopentanoate = 5-aminolevulinate. It functions in the pathway porphyrin-containing compound metabolism; protoporphyrin-IX biosynthesis; 5-aminolevulinate from L-glutamyl-tRNA(Glu): step 2/2. This is Glutamate-1-semialdehyde 2,1-aminomutase from Escherichia coli (strain K12 / DH10B).